The primary structure comprises 406 residues: Inner kinetochore subunit OKP1 (406 aa).

Disordered regions lie at residues 1-37 (MAADRDNFLQNIENDSINNGQAMDLSPNRSSSESDSS) and 59-122 (TQSK…TSGE). Polar residues predominate over residues 8–21 (FLQNIENDSINNGQ). Positions 26–37 (SPNRSSSESDSS) are enriched in low complexity. Residues 69–78 (NSDDAEEGEI) are compositionally biased toward acidic residues. A Phosphoserine modification is found at serine 70. Composition is skewed to basic and acidic residues over residues 79–89 (EERTNKEEGQY) and 97–106 (LRFEVGKEST). The segment covering 107 to 122 (GKLQSHLSDGSATSGE) has biased composition (polar residues). A coiled-coil region spans residues 239–285 (SKRQFIQNRYSQELQNNERLEAILSREQNLLEETRKLCMNLKTNNKK). Residues 317–340 (MHPDGPVTFRNDSHELNLMLNDPI) are CTF19-MCM21 binding motif. The segment at 353–400 (VLSLLPSLKEYTKKSKELKETMGQMISDSHEEEIKEVFVPHHESHQDK) is interaction with NKP1-NKP2. The interval 379 to 406 (SDSHEEEIKEVFVPHHESHQDKTEEDIH) is disordered. Basic and acidic residues predominate over residues 380–406 (DSHEEEIKEVFVPHHESHQDKTEEDIH).

The protein belongs to the CENP-Q/OKP1 family. As to quaternary structure, component of the heterotetrameric kinetochore subcomplex COMA, which consists of AME1, CTF19, MCM21 and OKP1. The COMA subcomplex is part of a larger constitutive centromere-associated network (CCAN) (also known as central kinetochore CTF19 complex in yeast), which is composed of at least AME1, CHL4, CNN1, CTF3, CTF19, IML3, MCM16, MCM21, MCM22, MHF1, MHF2, MIF2, NKP1, NKP2, OKP1 and WIP1. COMA binds the centromeric nucleosome-binding protein MIF2, and to the outer kinetochore MIND subcomplex. OKP1 interacts directly with AME1, with an NKP1-NKP2 dimer, and with CTF19-MCM21.

The protein localises to the nucleus. The protein resides in the chromosome. It is found in the centromere. Its subcellular location is the kinetochore. Its function is as follows. Component of the kinetochore, a multiprotein complex that assembles on centromeric DNA and attaches chromosomes to spindle microtubules, mediating chromosome segregation and sister chromatid segregation during meiosis and mitosis. Component of the inner kinetochore COMA complex, which connects centromere-associated proteins and the outer kinetochore. COMA interacts with other inner kinetochore proteins to form the inner kinetochore constitutive centromere-associated network (CCAN), which serves as a structural platform for outer kinetochore assembly. This Saccharomyces cerevisiae (strain ATCC 204508 / S288c) (Baker's yeast) protein is Inner kinetochore subunit OKP1.